A 176-amino-acid polypeptide reads, in one-letter code: 3-hydroxydecanoyl-[acyl-carrier-protein] dehydratase (176 aa).

The active site involves histidine 71.

This sequence belongs to the thioester dehydratase family. FabA subfamily. As to quaternary structure, homodimer.

It is found in the cytoplasm. It catalyses the reaction a (3R)-hydroxyacyl-[ACP] = a (2E)-enoyl-[ACP] + H2O. It carries out the reaction (3R)-hydroxydecanoyl-[ACP] = (2E)-decenoyl-[ACP] + H2O. The enzyme catalyses (2E)-decenoyl-[ACP] = (3Z)-decenoyl-[ACP]. Its pathway is lipid metabolism; fatty acid biosynthesis. In terms of biological role, necessary for the introduction of cis unsaturation into fatty acids. Catalyzes the dehydration of (3R)-3-hydroxydecanoyl-ACP to E-(2)-decenoyl-ACP and then its isomerization to Z-(3)-decenoyl-ACP. Can catalyze the dehydratase reaction for beta-hydroxyacyl-ACPs with saturated chain lengths up to 16:0, being most active on intermediate chain length. This is 3-hydroxydecanoyl-[acyl-carrier-protein] dehydratase from Rhodopseudomonas palustris (strain HaA2).